The sequence spans 839 residues: Valine--tRNA ligase (839 aa).

Positions 41 to 51 match the 'HIGH' region motif; it reads PNVTGKLHIGH. Residues 315–343 adopt a coiled-coil conformation; that stretch reads RENIVLKLKKENLIDKIENIKSNIIMSER. The 'KMSKS' region motif lies at 517 to 521; that stretch reads KMSKS. Residue Lys520 coordinates ATP. Positions 813–839 form a coiled coil; the sequence is INNASEIKVKEEKEKLEKYIKEFEEIK.

The protein belongs to the class-I aminoacyl-tRNA synthetase family. ValS type 1 subfamily. As to quaternary structure, monomer.

It localises to the cytoplasm. The enzyme catalyses tRNA(Val) + L-valine + ATP = L-valyl-tRNA(Val) + AMP + diphosphate. In terms of biological role, catalyzes the attachment of valine to tRNA(Val). As ValRS can inadvertently accommodate and process structurally similar amino acids such as threonine, to avoid such errors, it has a 'posttransfer' editing activity that hydrolyzes mischarged Thr-tRNA(Val) in a tRNA-dependent manner. This Mycoplasma mobile (strain ATCC 43663 / 163K / NCTC 11711) (Mesomycoplasma mobile) protein is Valine--tRNA ligase.